Reading from the N-terminus, the 166-residue chain is Putative 4-hydroxy-4-methyl-2-oxoglutarate aldolase 3 (166 aa).

An N-acetylalanine modification is found at A2. Substrate is bound by residues 81–84 and R103; that span reads GGNL. Residue D104 coordinates a divalent metal cation.

Belongs to the class II aldolase/RraA-like family. Homotrimer. A divalent metal cation is required as a cofactor.

It catalyses the reaction 4-hydroxy-4-methyl-2-oxoglutarate = 2 pyruvate. The catalysed reaction is oxaloacetate + H(+) = pyruvate + CO2. Its function is as follows. Catalyzes the aldol cleavage of 4-hydroxy-4-methyl-2-oxoglutarate (HMG) into 2 molecules of pyruvate. Also contains a secondary oxaloacetate (OAA) decarboxylase activity due to the common pyruvate enolate transition state formed following C-C bond cleavage in the retro-aldol and decarboxylation reactions. The protein is Putative 4-hydroxy-4-methyl-2-oxoglutarate aldolase 3 of Arabidopsis thaliana (Mouse-ear cress).